Reading from the N-terminus, the 63-residue chain is Large ribosomal subunit protein uL29 (63 aa).

It belongs to the universal ribosomal protein uL29 family.

The chain is Large ribosomal subunit protein uL29 from Vibrio campbellii (strain ATCC BAA-1116).